Here is a 211-residue protein sequence, read N- to C-terminus: MTETGERLRGLYAVTPDIPTDIEDLRARAEAVLRGGARLLQYRDKSADLPRREQAARALRALCERHGALFIVNDDVALALRVGAHGVHLGQQDMPLAEARAMLGREAIIGITCHERLDLALSAQAAGADYVAFGAVYPSPTKPGAVRAPLPLFTEARETLSIPVCAIGGIEADNAAAVIAAGADMVAVVSGVFARPDPEAEARRLAAMFEV.

Residues Gln-41 to Lys-45 and Asn-73 contribute to the 4-amino-2-methyl-5-(diphosphooxymethyl)pyrimidine site. Positions 74 and 93 each coordinate Mg(2+). Thr-112 is a 4-amino-2-methyl-5-(diphosphooxymethyl)pyrimidine binding site. Ser-139–Thr-141 is a binding site for 2-[(2R,5Z)-2-carboxy-4-methylthiazol-5(2H)-ylidene]ethyl phosphate. Residue Lys-142 participates in 4-amino-2-methyl-5-(diphosphooxymethyl)pyrimidine binding. 2-[(2R,5Z)-2-carboxy-4-methylthiazol-5(2H)-ylidene]ethyl phosphate-binding positions include Gly-169 and Val-189–Ser-190.

The protein belongs to the thiamine-phosphate synthase family. Mg(2+) is required as a cofactor.

It catalyses the reaction 2-[(2R,5Z)-2-carboxy-4-methylthiazol-5(2H)-ylidene]ethyl phosphate + 4-amino-2-methyl-5-(diphosphooxymethyl)pyrimidine + 2 H(+) = thiamine phosphate + CO2 + diphosphate. It carries out the reaction 2-(2-carboxy-4-methylthiazol-5-yl)ethyl phosphate + 4-amino-2-methyl-5-(diphosphooxymethyl)pyrimidine + 2 H(+) = thiamine phosphate + CO2 + diphosphate. The catalysed reaction is 4-methyl-5-(2-phosphooxyethyl)-thiazole + 4-amino-2-methyl-5-(diphosphooxymethyl)pyrimidine + H(+) = thiamine phosphate + diphosphate. It participates in cofactor biosynthesis; thiamine diphosphate biosynthesis; thiamine phosphate from 4-amino-2-methyl-5-diphosphomethylpyrimidine and 4-methyl-5-(2-phosphoethyl)-thiazole: step 1/1. Functionally, condenses 4-methyl-5-(beta-hydroxyethyl)thiazole monophosphate (THZ-P) and 2-methyl-4-amino-5-hydroxymethyl pyrimidine pyrophosphate (HMP-PP) to form thiamine monophosphate (TMP). The chain is Thiamine-phosphate synthase from Thioalkalivibrio sulfidiphilus (strain HL-EbGR7).